The following is a 439-amino-acid chain: Choline monooxygenase, chloroplastic (439 aa).

A chloroplast-targeting transit peptide spans 1 to 60; the sequence is MMAASASATTMLLKYPTTVCGIPNPSSNNNNDPSNNIVSIPQNTTNPTLKSRTPNKITTN. Residues 24-41 are compositionally biased toward low complexity; sequence NPSSNNNNDPSNNIVSIP. A disordered region spans residues 24-54; that stretch reads NPSSNNNNDPSNNIVSIPQNTTNPTLKSRTP. The span at 42 to 54 shows a compositional bias: polar residues; the sequence is QNTTNPTLKSRTP. A Rieske domain is found at 120–227; it reads WQVAGISDQI…VAVWGPFVLI (108 aa). C162, H164, C181, and H184 together coordinate [2Fe-2S] cluster. Positions 287 and 292 each coordinate Fe cation.

Homotrimer or homodimer. [2Fe-2S] cluster serves as cofactor. Fe cation is required as a cofactor. The cofactor is Mg(2+). Expressed in leaves.

The protein resides in the plastid. It localises to the chloroplast stroma. The enzyme catalyses choline + 2 reduced [2Fe-2S]-[ferredoxin] + O2 + 2 H(+) = betaine aldehyde hydrate + 2 oxidized [2Fe-2S]-[ferredoxin] + H2O. Its pathway is amine and polyamine biosynthesis; betaine biosynthesis via choline pathway; betaine aldehyde from choline (monooxygenase route): step 1/1. In terms of biological role, catalyzes the first step of the osmoprotectant glycine betaine synthesis. The polypeptide is Choline monooxygenase, chloroplastic (CMO) (Spinacia oleracea (Spinach)).